Consider the following 208-residue polypeptide: Small ribosomal subunit protein uS4 (208 aa).

One can recognise an S4 RNA-binding domain in the interval 98–178 (SRLDNVVYRM…RPKWLEYDAE (81 aa)).

The protein belongs to the universal ribosomal protein uS4 family. Part of the 30S ribosomal subunit. Contacts protein S5. The interaction surface between S4 and S5 is involved in control of translational fidelity.

In terms of biological role, one of the primary rRNA binding proteins, it binds directly to 16S rRNA where it nucleates assembly of the body of the 30S subunit. Its function is as follows. With S5 and S12 plays an important role in translational accuracy. In Acetivibrio thermocellus (strain ATCC 27405 / DSM 1237 / JCM 9322 / NBRC 103400 / NCIMB 10682 / NRRL B-4536 / VPI 7372) (Clostridium thermocellum), this protein is Small ribosomal subunit protein uS4.